A 150-amino-acid polypeptide reads, in one-letter code: Large ribosomal subunit protein bL9 (150 aa).

This sequence belongs to the bacterial ribosomal protein bL9 family.

In terms of biological role, binds to the 23S rRNA. The sequence is that of Large ribosomal subunit protein bL9 from Streptococcus pyogenes serotype M3 (strain SSI-1).